The chain runs to 338 residues: Nicotinate-nucleotide--dimethylbenzimidazole phosphoribosyltransferase (338 aa).

The active-site Proton acceptor is Glu305.

Belongs to the CobT family.

It catalyses the reaction 5,6-dimethylbenzimidazole + nicotinate beta-D-ribonucleotide = alpha-ribazole 5'-phosphate + nicotinate + H(+). Its pathway is nucleoside biosynthesis; alpha-ribazole biosynthesis; alpha-ribazole from 5,6-dimethylbenzimidazole: step 1/2. Functionally, catalyzes the synthesis of alpha-ribazole-5'-phosphate from nicotinate mononucleotide (NAMN) and 5,6-dimethylbenzimidazole (DMB). This chain is Nicotinate-nucleotide--dimethylbenzimidazole phosphoribosyltransferase, found in Sinorhizobium fredii (strain NBRC 101917 / NGR234).